Reading from the N-terminus, the 106-residue chain is Small ribosomal subunit protein bS18 (106 aa).

Over residues 1–22 (MSEETTVRPERTERSERPERPQ) the composition is skewed to basic and acidic residues. The disordered stretch occupies residues 1–34 (MSEETTVRPERTERSERPERPQYRGNGPRKRRPF).

This sequence belongs to the bacterial ribosomal protein bS18 family. As to quaternary structure, part of the 30S ribosomal subunit. Forms a tight heterodimer with protein bS6.

Functionally, binds as a heterodimer with protein bS6 to the central domain of the 16S rRNA, where it helps stabilize the platform of the 30S subunit. The chain is Small ribosomal subunit protein bS18 from Geobacter metallireducens (strain ATCC 53774 / DSM 7210 / GS-15).